Consider the following 1976-residue polypeptide: Myosin-10 (1976 aa).

Arginine 18 bears the Omega-N-methylarginine mark. Residues 31-81 (TAKKLVWIPSERHGFEAASIKEERGDEVMVELAENGKKAMVNKDDIQKMNP) enclose the Myosin N-terminal SH3-like domain. The Myosin motor domain occupies 85 to 783 (SKVEDMAELT…VLAHLEEERD (699 aa)). 178-185 (GESGAGKT) provides a ligand contact to ATP. Lysine 442 is subject to N6-acetyllysine. Residues 661–683 (LTKLMATLRNTNPNFVRCIIPNH) are actin-binding. Residues 786–815 (ITDIIIFFQAVCRGYLARKAFAKKQQQLSA) form the IQ domain. Residues 845 to 1976 (LQVTRQEEEL…VNDTQPPQSE (1132 aa)) adopt a coiled-coil conformation. The segment at 1125–1175 (EDFESEKASRNKAEKQKRDLSEELEALKTELEDTLDTTAAQQELRTKREQE) is disordered. The span at 1129 to 1155 (SEKASRNKAEKQKRDLSEELEALKTEL) shows a compositional bias: basic and acidic residues. The residue at position 1145 (serine 1145) is a Phosphoserine. Lysine 1241, lysine 1301, and lysine 1645 each carry N6-acetyllysine. 2 disordered regions span residues 1697–1718 (ASSE…DEIA) and 1874–1976 (KANA…PQSE). Residues 1698 to 1708 (SSERARRHAEQ) are compositionally biased toward basic and acidic residues. Arginine 1930 bears the Omega-N-methylarginine mark. A phosphoserine mark is found at serine 1935, serine 1937, serine 1938, and serine 1939. Arginine 1940 carries the omega-N-methylarginine modification. Serine 1952 and serine 1956 each carry phosphoserine. Threonine 1960 is subject to Phosphothreonine. Residues 1967-1976 (VNDTQPPQSE) show a composition bias toward polar residues. Serine 1975 is subject to Phosphoserine.

The protein belongs to the TRAFAC class myosin-kinesin ATPase superfamily. Myosin family. In terms of assembly, myosin is a hexameric protein that consists of 2 heavy chain subunits (MHC), 2 alkali light chain subunits (MLC) and 2 regulatory light chain subunits (MLC-2). Interacts with PLEKHG6. Interacts with ECPAS. Interacts with LARP6. Interacts with MCC. Interacts with KIF26B. Interacts with CFAP95. In terms of processing, phosphorylated by ABL2. As to expression, in newborn kidney, expressed in the mesenchyme and ureteric buds.

The protein localises to the cell projection. The protein resides in the lamellipodium. Involved with LARP6 in the stabilization of type I collagen mRNAs for CO1A1 and CO1A2. During cell spreading, plays an important role in cytoskeleton reorganization, focal contacts formation (in the central part but not the margins of spreading cells), and lamellipodial extension; this function is mechanically antagonized by MYH9. Cellular myosin that appears to play a role in cytokinesis, cell shape, and specialized functions such as secretion and capping. In Mus musculus (Mouse), this protein is Myosin-10 (Myh10).